The sequence spans 493 residues: Cobyric acid synthase (493 aa).

The GATase cobBQ-type domain occupies 252–443; that stretch reads DLQITVVRLP…LHGLFDNGPW (192 aa). Catalysis depends on Cys-333, which acts as the Nucleophile. Residue His-435 is part of the active site.

Belongs to the CobB/CobQ family. CobQ subfamily.

The protein operates within cofactor biosynthesis; adenosylcobalamin biosynthesis. Catalyzes amidations at positions B, D, E, and G on adenosylcobyrinic A,C-diamide. NH(2) groups are provided by glutamine, and one molecule of ATP is hydrogenolyzed for each amidation. The chain is Cobyric acid synthase from Nostoc sp. (strain PCC 7120 / SAG 25.82 / UTEX 2576).